The sequence spans 277 residues: Acyl-coenzyme A thioesterase MBLAC2 (277 aa).

Zn(2+) is bound by residues H80, H82, D84, H85, H167, D186, and H228.

The protein belongs to the metallo-beta-lactamase superfamily. Glyoxalase II family. It depends on Zn(2+) as a cofactor.

It is found in the endoplasmic reticulum membrane. Its subcellular location is the cell membrane. It carries out the reaction hexadecanoyl-CoA + H2O = hexadecanoate + CoA + H(+). The catalysed reaction is dodecanoyl-CoA + H2O = dodecanoate + CoA + H(+). The enzyme catalyses tetradecanoyl-CoA + H2O = tetradecanoate + CoA + H(+). It catalyses the reaction octadecanoyl-CoA + H2O = octadecanoate + CoA + H(+). It carries out the reaction a beta-lactam + H2O = a substituted beta-amino acid. Functionally, acyl-CoA thioesterases are a group of enzymes that catalyze the hydrolysis of acyl-CoAs to the free fatty acid and coenzyme A (CoASH), providing the potential to regulate intracellular levels of acyl-CoAs, free fatty acids and CoASH. Has an acyl-CoA thioesterase activity towards the long chain fatty acyl-CoA thioester palmitoyl-CoA (hexadecanoyl-CoA; C16:0-CoA). Displays a substrate preference for fatty acyl-CoAs with chain-lengths C12-C18. This is Acyl-coenzyme A thioesterase MBLAC2 (MBLAC2) from Gallus gallus (Chicken).